A 379-amino-acid chain; its full sequence is All-trans-retinol dehydrogenase [NAD(+)] ADH4 (379 aa).

Thr-1 carries the N-acetylthreonine modification. Zn(2+) is bound by residues Cys-46, His-68, Cys-98, Cys-101, Cys-104, Cys-112, and Cys-179. Residues 204 to 209 (GLGGVG), Asp-228, Lys-233, 297 to 299 (VGV), and Arg-374 each bind NAD(+).

Belongs to the zinc-containing alcohol dehydrogenase family. Class-II subfamily. As to quaternary structure, homodimer. The cofactor is Zn(2+).

The protein resides in the cytoplasm. The catalysed reaction is all-trans-retinol + NAD(+) = all-trans-retinal + NADH + H(+). It catalyses the reaction 9-cis-retinol + NAD(+) = 9-cis-retinal + NADH + H(+). It carries out the reaction 20-oxo-(5Z,8Z,11Z,14Z)-eicosatetraenoate + NAD(+) + H2O = (5Z,8Z,11Z,14Z)-eicosatetraenedioate + NADH + 2 H(+). The enzyme catalyses 20-hydroxy-(5Z,8Z,11Z,14Z)-eicosatetraenoate + NAD(+) = 20-oxo-(5Z,8Z,11Z,14Z)-eicosatetraenoate + NADH + H(+). The catalysed reaction is 1,4-benzoquinone + NADH + H(+) = hydroquinone + NAD(+). Its activity is regulated as follows. Oxidation of 20-HETE is inhibited by low concentrations of N-heptylformamide. Oxidation of 20-HETE is a decreased by 55-65% by either all-trans-retinol or all-trans-retinoic acid. Strongly inhibited by omega-hydroxy fatty acids. Its function is as follows. Catalyzes the NAD-dependent oxidation of either all-trans-retinol or 9-cis-retinol. Also oxidizes long chain omega-hydroxy fatty acids, such as 20-HETE, producing both the intermediate aldehyde, 20-oxoarachidonate and the end product, a dicarboxylic acid, (5Z,8Z,11Z,14Z)-eicosatetraenedioate. Also catalyzes the reduction of benzoquinones. This Struthio camelus (Common ostrich) protein is All-trans-retinol dehydrogenase [NAD(+)] ADH4.